The chain runs to 267 residues: Phosphate import ATP-binding protein PstB 2 (267 aa).

The ABC transporter domain occupies 21-262; that stretch reads LSTKDVHVYY…AKLQSTNDYV (242 aa). 53–60 contributes to the ATP binding site; sequence GPSGSGKS.

It belongs to the ABC transporter superfamily. Phosphate importer (TC 3.A.1.7) family. The complex is composed of two ATP-binding proteins (PstB), two transmembrane proteins (PstC and PstA) and a solute-binding protein (PstS).

Its subcellular location is the cell membrane. The catalysed reaction is phosphate(out) + ATP + H2O = ADP + 2 phosphate(in) + H(+). Part of the ABC transporter complex PstSACB involved in phosphate import. Responsible for energy coupling to the transport system. This Streptococcus pneumoniae (strain ATCC BAA-255 / R6) protein is Phosphate import ATP-binding protein PstB 2.